Reading from the N-terminus, the 336-residue chain is Holliday junction branch migration complex subunit RuvB (336 aa).

Positions 4–185 (ADRLISADIQ…FGIVQRLEFY (182 aa)) are large ATPase domain (RuvB-L). ATP-binding positions include isoleucine 24, arginine 25, glycine 66, lysine 69, threonine 70, threonine 71, 132 to 134 (EDY), arginine 175, tyrosine 185, and arginine 222. Threonine 70 contacts Mg(2+). The interval 186 to 256 (NVDDLQHIVA…IASKALDMLN (71 aa)) is small ATPAse domain (RuvB-S). The tract at residues 259–336 (AAGFDYLDRK…RHFNRIMEAP (78 aa)) is head domain (RuvB-H). Arginine 295, arginine 314, and arginine 319 together coordinate DNA.

This sequence belongs to the RuvB family. As to quaternary structure, homohexamer. Forms an RuvA(8)-RuvB(12)-Holliday junction (HJ) complex. HJ DNA is sandwiched between 2 RuvA tetramers; dsDNA enters through RuvA and exits via RuvB. An RuvB hexamer assembles on each DNA strand where it exits the tetramer. Each RuvB hexamer is contacted by two RuvA subunits (via domain III) on 2 adjacent RuvB subunits; this complex drives branch migration. In the full resolvosome a probable DNA-RuvA(4)-RuvB(12)-RuvC(2) complex forms which resolves the HJ.

Its subcellular location is the cytoplasm. It carries out the reaction ATP + H2O = ADP + phosphate + H(+). The RuvA-RuvB-RuvC complex processes Holliday junction (HJ) DNA during genetic recombination and DNA repair, while the RuvA-RuvB complex plays an important role in the rescue of blocked DNA replication forks via replication fork reversal (RFR). RuvA specifically binds to HJ cruciform DNA, conferring on it an open structure. The RuvB hexamer acts as an ATP-dependent pump, pulling dsDNA into and through the RuvAB complex. RuvB forms 2 homohexamers on either side of HJ DNA bound by 1 or 2 RuvA tetramers; 4 subunits per hexamer contact DNA at a time. Coordinated motions by a converter formed by DNA-disengaged RuvB subunits stimulates ATP hydrolysis and nucleotide exchange. Immobilization of the converter enables RuvB to convert the ATP-contained energy into a lever motion, pulling 2 nucleotides of DNA out of the RuvA tetramer per ATP hydrolyzed, thus driving DNA branch migration. The RuvB motors rotate together with the DNA substrate, which together with the progressing nucleotide cycle form the mechanistic basis for DNA recombination by continuous HJ branch migration. Branch migration allows RuvC to scan DNA until it finds its consensus sequence, where it cleaves and resolves cruciform DNA. This Proteus mirabilis (strain HI4320) protein is Holliday junction branch migration complex subunit RuvB.